The primary structure comprises 57 residues: UPF0509 protein YciZ (57 aa).

This sequence belongs to the UPF0509 family.

The chain is UPF0509 protein YciZ (yciZ) from Shigella flexneri.